The chain runs to 150 residues: Deoxyuridine 5'-triphosphate nucleotidohydrolase (150 aa).

Substrate contacts are provided by residues Arg-69–Gly-71, Asn-82, Leu-86–Asp-88, and Met-96.

Belongs to the dUTPase family. Mg(2+) serves as cofactor.

The enzyme catalyses dUTP + H2O = dUMP + diphosphate + H(+). The protein operates within pyrimidine metabolism; dUMP biosynthesis; dUMP from dCTP (dUTP route): step 2/2. In terms of biological role, this enzyme is involved in nucleotide metabolism: it produces dUMP, the immediate precursor of thymidine nucleotides and it decreases the intracellular concentration of dUTP so that uracil cannot be incorporated into DNA. In Acinetobacter baylyi (strain ATCC 33305 / BD413 / ADP1), this protein is Deoxyuridine 5'-triphosphate nucleotidohydrolase.